We begin with the raw amino-acid sequence, 570 residues long: MNIEEVALKYALANAVKYGGKADVKAVMAKIMAEVPELRPRAREVKEVVEAVVARVNAMSLEEQRRLLEEKWPEALEEKRPEQKRPGIEALPDLPKVKGGVVVRFAPNPDFVLHLGSARPAILNYAYRLKYGGRFILRFEDTDPRTKRPLVTEEVNAYEAIREDLRWLGVSWDEEYIQSRRMEVYYDYAKRLLAMGAAYVDLCRPEEWRRLRNEGRACPHRSQSPEENLELWDKMLEGRFREGEAVVRIKTDLSHPDPSVRDWVAFRIIDTSKTPHPLVGDKYIVWPTYNFAVSIDDHLMGVTHVLRAQEHSVNTVKQSYVFKHFGWEQPVTIHFGRLKIEGATLSKSKLKALKVRYDDPTLPTLAGLRARGILPEAIWELILTVGIKPSDSTVALSNLFALNRKKIEPVANRYMYVADPVRLVFEADRELVAKVPYHPSFRERGERVYRLGPGRVEVFVQRQDVKEGAVVRLMELANVEIERVEGGVAYGRLHSLSLEEARKIGAPIIQWVVDPVEVRVVRPWAPGRKVEEVGLGEAVLRGVEVGAYAQFFRYGFVKKIGPDVFIYVHD.

The 'HIGH' region signature appears at 107 to 117 (PNPDFVLHLGS).

The protein belongs to the class-I aminoacyl-tRNA synthetase family. Glutamate--tRNA ligase type 2 subfamily.

The protein localises to the cytoplasm. It catalyses the reaction tRNA(Glu) + L-glutamate + ATP = L-glutamyl-tRNA(Glu) + AMP + diphosphate. In terms of biological role, catalyzes the attachment of glutamate to tRNA(Glu) in a two-step reaction: glutamate is first activated by ATP to form Glu-AMP and then transferred to the acceptor end of tRNA(Glu). This chain is Glutamate--tRNA ligase, found in Pyrobaculum calidifontis (strain DSM 21063 / JCM 11548 / VA1).